We begin with the raw amino-acid sequence, 123 residues long: Small ribosomal subunit protein uS12c (123 aa).

Belongs to the universal ribosomal protein uS12 family. As to quaternary structure, part of the 30S ribosomal subunit.

The protein resides in the plastid. It is found in the chloroplast. With S4 and S5 plays an important role in translational accuracy. Located at the interface of the 30S and 50S subunits. In Oenothera elata subsp. hookeri (Hooker's evening primrose), this protein is Small ribosomal subunit protein uS12c (rps12).